The following is a 223-amino-acid chain: Small ribosomal subunit protein uS3 (223 aa).

Positions 39 to 108 (IRNFVKKNSY…NILINIVEVK (70 aa)) constitute a KH type-2 domain.

This sequence belongs to the universal ribosomal protein uS3 family. In terms of assembly, part of the 30S ribosomal subunit. Forms a tight complex with proteins S10 and S14.

In terms of biological role, binds the lower part of the 30S subunit head. Binds mRNA in the 70S ribosome, positioning it for translation. The polypeptide is Small ribosomal subunit protein uS3 (Clostridium botulinum (strain Hall / ATCC 3502 / NCTC 13319 / Type A)).